A 401-amino-acid chain; its full sequence is Argininosuccinate synthase (401 aa).

Residues 7–15 (AYSGGLDTS) and A34 contribute to the ATP site. The L-citrulline site is built by Y85 and S90. G115 contacts ATP. T117, N121, and D122 together coordinate L-aspartate. N121 is an L-citrulline binding site. L-citrulline-binding residues include R125, S174, S183, E259, and Y271.

It belongs to the argininosuccinate synthase family. Type 1 subfamily. Homotetramer.

The protein resides in the cytoplasm. The catalysed reaction is L-citrulline + L-aspartate + ATP = 2-(N(omega)-L-arginino)succinate + AMP + diphosphate + H(+). Its pathway is amino-acid biosynthesis; L-arginine biosynthesis; L-arginine from L-ornithine and carbamoyl phosphate: step 2/3. This chain is Argininosuccinate synthase, found in Desulfitobacterium hafniense (strain DSM 10664 / DCB-2).